The sequence spans 136 residues: ATP synthase epsilon chain (136 aa).

Belongs to the ATPase epsilon chain family. F-type ATPases have 2 components, CF(1) - the catalytic core - and CF(0) - the membrane proton channel. CF(1) has five subunits: alpha(3), beta(3), gamma(1), delta(1), epsilon(1). CF(0) has three main subunits: a, b and c.

It is found in the cell membrane. Its function is as follows. Produces ATP from ADP in the presence of a proton gradient across the membrane. This is ATP synthase epsilon chain from Exiguobacterium sp. (strain ATCC BAA-1283 / AT1b).